Consider the following 302-residue polypeptide: N-acetylmuramic acid 6-phosphate etherase (302 aa).

In terms of domain architecture, SIS spans 58-221 (IGEAFLNGGR…STGAMVKTGK (164 aa)). The Proton donor role is filled by glutamate 86. Residue glutamate 117 is part of the active site.

The protein belongs to the GCKR-like family. MurNAc-6-P etherase subfamily. In terms of assembly, homodimer.

It carries out the reaction N-acetyl-D-muramate 6-phosphate + H2O = N-acetyl-D-glucosamine 6-phosphate + (R)-lactate. It functions in the pathway amino-sugar metabolism; N-acetylmuramate degradation. Functionally, specifically catalyzes the cleavage of the D-lactyl ether substituent of MurNAc 6-phosphate, producing GlcNAc 6-phosphate and D-lactate. The polypeptide is N-acetylmuramic acid 6-phosphate etherase (Clostridium botulinum (strain Hall / ATCC 3502 / NCTC 13319 / Type A)).